Reading from the N-terminus, the 147-residue chain is Globin (147 aa).

Positions Gly-1–Val-147 constitute a Globin domain. His-66 and His-98 together coordinate heme b.

Belongs to the globin family. As to quaternary structure, homodimer.

Its subcellular location is the cytoplasm. The chain is Globin from Busycotypus canaliculatus (Channeled whelk).